Reading from the N-terminus, the 512-residue chain is ATP synthase subunit alpha 1 (512 aa).

Residue 169 to 176 (GDRQTGKT) participates in ATP binding.

This sequence belongs to the ATPase alpha/beta chains family. In terms of assembly, F-type ATPases have 2 components, CF(1) - the catalytic core - and CF(0) - the membrane proton channel. CF(1) has five subunits: alpha(3), beta(3), gamma(1), delta(1), epsilon(1). CF(0) has four main subunits: a(1), b(1), b'(1) and c(9-12).

The protein localises to the cell inner membrane. The enzyme catalyses ATP + H2O + 4 H(+)(in) = ADP + phosphate + 5 H(+)(out). Its function is as follows. Produces ATP from ADP in the presence of a proton gradient across the membrane. The alpha chain is a regulatory subunit. The protein is ATP synthase subunit alpha 1 of Cereibacter sphaeroides (strain ATCC 17029 / ATH 2.4.9) (Rhodobacter sphaeroides).